Reading from the N-terminus, the 251-residue chain is D-aminoacyl-tRNA deacylase (251 aa).

The protein belongs to the DtdA deacylase family. As to quaternary structure, monomer. Zn(2+) serves as cofactor.

It catalyses the reaction a D-aminoacyl-tRNA + H2O = a tRNA + a D-alpha-amino acid + H(+). The enzyme catalyses glycyl-tRNA(Ala) + H2O = tRNA(Ala) + glycine + H(+). Its function is as follows. D-aminoacyl-tRNA deacylase with broad substrate specificity. By recycling D-aminoacyl-tRNA to D-amino acids and free tRNA molecules, this enzyme counteracts the toxicity associated with the formation of D-aminoacyl-tRNA entities in vivo. This chain is D-aminoacyl-tRNA deacylase, found in Pyrobaculum calidifontis (strain DSM 21063 / JCM 11548 / VA1).